The chain runs to 369 residues: F-box protein At3g08750 (369 aa).

The 48-residue stretch at 6–53 (CLLLPSLPFELIEEILYKIPAESLIRFKSTCKKWYNLITEKRFMYNHL) folds into the F-box domain.

This is F-box protein At3g08750 from Arabidopsis thaliana (Mouse-ear cress).